We begin with the raw amino-acid sequence, 348 residues long: MSDRLTLLRPDDWHIHLRDGAVLPHTVGDAARTFGRAIIMPNLVPPVRNAAEADAYRQRILAARPAGSRFEPLMVLYLTDNTSPEDVRAAKASGFVHAAKLYPAGATTNSDSGVTSIDKIFPALEAMAEVGMLLLVHGEVTRAEIDVFDREKAFIDEHLTRVVERFPTLKVVFEHITTRDAVQFVEAASANVGATITAHHLLYNRNHMLVGGIRPHFYCLPILKRNVHQEALLDAATSGNVKFFLGTDSAPHAKHAKEAACGCAGCYTAFAAIELYAEAFEQRNALDKLEAFASFHGPDFYGLPRNTDSITLVREEWTVPASLPLGENSVVPLRAGETLRWKLLEGQA.

Residues His14 and His16 each coordinate Zn(2+). Residues 16 to 18 and Asn42 each bind substrate; that span reads HLR. Positions 100, 137, and 175 each coordinate Zn(2+). At Lys100 the chain carries N6-carboxylysine. His137 lines the substrate pocket. Leu220 serves as a coordination point for substrate. Asp248 provides a ligand contact to Zn(2+). Asp248 is an active-site residue. Residues His252 and Ala264 each coordinate substrate.

The protein belongs to the metallo-dependent hydrolases superfamily. DHOase family. Class II DHOase subfamily. In terms of assembly, homodimer. Requires Zn(2+) as cofactor.

The catalysed reaction is (S)-dihydroorotate + H2O = N-carbamoyl-L-aspartate + H(+). The protein operates within pyrimidine metabolism; UMP biosynthesis via de novo pathway; (S)-dihydroorotate from bicarbonate: step 3/3. In terms of biological role, catalyzes the reversible cyclization of carbamoyl aspartate to dihydroorotate. This Ectopseudomonas mendocina (strain ymp) (Pseudomonas mendocina) protein is Dihydroorotase.